We begin with the raw amino-acid sequence, 184 residues long: LPS-assembly lipoprotein LptE (184 aa).

The N-terminal stretch at 1 to 19 (MRHRLFTLVLGLAVLITAG) is a signal peptide. Residue Cys20 is the site of N-palmitoyl cysteine attachment. A lipid anchor (S-diacylglycerol cysteine) is attached at Cys20.

The protein belongs to the LptE lipoprotein family. Component of the lipopolysaccharide transport and assembly complex. Interacts with LptD.

The protein localises to the cell outer membrane. Its function is as follows. Together with LptD, is involved in the assembly of lipopolysaccharide (LPS) at the surface of the outer membrane. Required for the proper assembly of LptD. Binds LPS and may serve as the LPS recognition site at the outer membrane. The chain is LPS-assembly lipoprotein LptE from Pectobacterium atrosepticum (strain SCRI 1043 / ATCC BAA-672) (Erwinia carotovora subsp. atroseptica).